We begin with the raw amino-acid sequence, 148 residues long: Iron/alpha-ketoglutarate-dependent dioxygenase ausU (148 aa).

The Fe cation site is built by His45 and Asp47.

This sequence belongs to the PhyH family. As to quaternary structure, homodimer. The cofactor is Fe cation.

It participates in secondary metabolite biosynthesis; terpenoid biosynthesis. Its function is as follows. Iron/alpha-ketoglutarate-dependent dioxygenase; part of the gene cluster B that mediates the biosynthesis of austinol and dehydroaustinol, two fungal meroterpenoids. The first step of the pathway is the synthesis of 3,5-dimethylorsellinic acid by the polyketide synthase ausA. 3,5-dimethylorsellinic acid is then prenylated by the polyprenyl transferase ausN. Further epoxidation by the FAD-dependent monooxygenase ausM and cyclization by the probable terpene cyclase ausL lead to the formation of protoaustinoid A. Protoaustinoid A is then oxidized to spiro-lactone preaustinoid A3 by the combined action of the FAD-binding monooxygenases ausB and ausC, and the dioxygenase ausE. Acid-catalyzed keto-rearrangement and ring contraction of the tetraketide portion of preaustinoid A3 by ausJ lead to the formation of preaustinoid A4. The aldo-keto reductase ausK, with the help of ausH, is involved in the next step by transforming preaustinoid A4 into isoaustinone which is in turn hydroxylated by the P450 monooxygenase ausI to form austinolide. Finally, the cytochrome P450 monooxygenase ausG modifies austinolide to austinol. Austinol can be further modified to dehydroaustinol which forms a diffusible complex with diorcinol that initiates conidiation. Due to genetic rearrangements of the clusters and the subsequent loss of some enzymes, the end products of the Emericella nidulans austinoid biosynthesis clusters are austinol and dehydroaustinol, even if additional enzymes, such as the O-acetyltransferase ausQ and the cytochrome P450 monooxygenase ausR are still functional. In Emericella nidulans (strain FGSC A4 / ATCC 38163 / CBS 112.46 / NRRL 194 / M139) (Aspergillus nidulans), this protein is Iron/alpha-ketoglutarate-dependent dioxygenase ausU.